Here is a 543-residue protein sequence, read N- to C-terminus: 2,3-bisphosphoglycerate-independent phosphoglycerate mutase (543 aa).

Residues Asp-24 and Ser-74 each contribute to the Mn(2+) site. The Phosphoserine intermediate role is filled by Ser-74. Residues His-135, 165-166, Arg-197, Arg-203, 268-271, and Lys-341 each bind substrate; these read RD and RPDR. Mn(2+)-binding residues include Asp-408, His-412, Asp-449, His-450, and His-467.

Belongs to the BPG-independent phosphoglycerate mutase family. Monomer. Mn(2+) serves as cofactor.

The catalysed reaction is (2R)-2-phosphoglycerate = (2R)-3-phosphoglycerate. The protein operates within carbohydrate degradation; glycolysis; pyruvate from D-glyceraldehyde 3-phosphate: step 3/5. Functionally, catalyzes the interconversion of 2-phosphoglycerate and 3-phosphoglycerate. This Parasynechococcus marenigrum (strain WH8102) protein is 2,3-bisphosphoglycerate-independent phosphoglycerate mutase.